Reading from the N-terminus, the 286-residue chain is Mitochondrial dicarboxylate carrier (286 aa).

3 Solcar repeats span residues 7-87, 100-187, and 196-279; these read SRWY…MRDY, SKVL…AKQL, and DNIF…LRKH. 3 helical membrane-spanning segments follow: residues 9–29, 62–81, and 102–122; these read WYFGGLASCGAACCTHPLDLL, GLSASLCRQMTYSLTRFAIY, and VLLGGISGLTGGFVGTPADLV. Lys158 is subject to N6-acetyllysine. 3 helical membrane-spanning segments follow: residues 162–181, 202–222, and 254–274; these read GATMASSRGALVTVGQLSCY, FLSSFIAGGCATFLCQPLDVL, and GLVPAGVRLVPHTVLTFMFLE.

It belongs to the mitochondrial carrier (TC 2.A.29) family. As to expression, expressed most strongly in liver, then kidney, and at lower levels in heart and brain.

It localises to the mitochondrion inner membrane. It catalyses the reaction (S)-malate(in) + phosphate(out) = (S)-malate(out) + phosphate(in). It carries out the reaction malonate(out) + (S)-malate(in) = malonate(in) + (S)-malate(out). The catalysed reaction is (S)-malate(in) + succinate(out) = (S)-malate(out) + succinate(in). The enzyme catalyses (S)-malate(in) + sulfate(out) = (S)-malate(out) + sulfate(in). It catalyses the reaction malonate(out) + phosphate(in) = malonate(in) + phosphate(out). It carries out the reaction succinate(out) + phosphate(in) = succinate(in) + phosphate(out). The catalysed reaction is sulfate(out) + phosphate(in) = sulfate(in) + phosphate(out). The enzyme catalyses malonate(out) + succinate(in) = malonate(in) + succinate(out). Functionally, catalyzes the electroneutral exchange or flux of physiologically important metabolites such as dicarboxylates (malonate, malate, succinate), inorganic sulfur-containing anions, and phosphate, across mitochondrial inner membrane. Plays an important role in gluconeogenesis, fatty acid metabolism, urea synthesis, and sulfur metabolism, particularly in liver, by supplying the substrates for the different metabolic processes. Regulates fatty acid release from adipocytes, and contributes to systemic insulin sensitivity. The polypeptide is Mitochondrial dicarboxylate carrier (Rattus norvegicus (Rat)).